A 119-amino-acid polypeptide reads, in one-letter code: Large ribosomal subunit protein bL20 (119 aa).

This sequence belongs to the bacterial ribosomal protein bL20 family.

Its function is as follows. Binds directly to 23S ribosomal RNA and is necessary for the in vitro assembly process of the 50S ribosomal subunit. It is not involved in the protein synthesizing functions of that subunit. This chain is Large ribosomal subunit protein bL20, found in Alkaliphilus metalliredigens (strain QYMF).